Reading from the N-terminus, the 418-residue chain is Diacylglycerol O-acyltransferase 1 (418 aa).

Positions 1 to 30 are disordered; the sequence is MSGTFNDIRRRKKEEGSPTAGITERHENKS. The Cytoplasmic portion of the chain corresponds to 1 to 71; that stretch reads MSGTFNDIRR…LAVAWHTSSF (71 aa). The residue at position 17 (S17) is a Phosphoserine. Residues 72-92 form a helical membrane-spanning segment; the sequence is VLFSIFTLFAISTPALWVLAI. At 93-186 the chain is on the lumenal side; sequence PYMIYFFFDR…DYRNQECTGP (94 aa). N-linked (GlcNAc...) asparagine glycosylation occurs at N173. The chain crosses the membrane as a helical span at residues 187–207; it reads TYLFGYHPHGIGALGAFGAFA. Residues 208–215 lie on the Cytoplasmic side of the membrane; sequence TEGCNYSK. A helical membrane pass occupies residues 216–236; that stretch reads IFPGIPISLMTLVTQFHIPLY. At 237–289 the chain is on the lumenal side; the sequence is RDYLLALGISSVSRKNALRTLSKNQSICIVVGGARESLLSSTNGTQLILNKRK. N260 and N279 each carry an N-linked (GlcNAc...) asparagine glycan. Residues 290–310 form a helical membrane-spanning segment; that stretch reads GFIKLAIQTGNINLVPVFAFG. Topologically, residues 311-418 are cytoplasmic; it reads EVDCYNVLST…VPDAELKIVG (108 aa).

Belongs to the diacylglycerol acyltransferase family.

It localises to the lipid droplet. The protein resides in the endoplasmic reticulum membrane. The enzyme catalyses an acyl-CoA + a 1,2-diacyl-sn-glycerol = a triacyl-sn-glycerol + CoA. The catalysed reaction is a 2-acylglycerol + an acyl-CoA = a 1,2-diacylglycerol + CoA. It catalyses the reaction 2-(9Z-octadecenoyl)-glycerol + (9Z)-octadecenoyl-CoA = 1,2-di-(9Z-octadecenoyl)-glycerol + CoA. Its pathway is glycerolipid metabolism; triacylglycerol biosynthesis. Functionally, catalyzes the terminal and only committed step in triacylglycerol (TAG) synthesis by using diacylglycerol (DAG) and fatty acyl-CoA as substrates. Required for storage lipid synthesis. Major DAG esterifying enzyme in stationary phase when TAG production is particularly active. Involved in lipid particle synthesis from the endoplasmic reticulum, promoting localized TAG production at discrete ER subdomains, and in ergosterol biosynthesis. Also has monoacylglycerol acyltransferase (MGAT) activity, catalyzing the acyl-CoA-dependent esterification of monoacylglycerol to diacylglycerol. Can also utilize ceramide instead of DAG, acylating the ceramides by attaching a fatty acid to the hydroxy group on the first carbon atom of the long-chain base to produce 1-O-acylceramides. The polypeptide is Diacylglycerol O-acyltransferase 1 (DGA1) (Saccharomyces cerevisiae (strain ATCC 204508 / S288c) (Baker's yeast)).